The primary structure comprises 212 residues: Phosphoribosylglycinamide formyltransferase (212 aa).

11–13 (GSN) serves as a coordination point for N(1)-(5-phospho-beta-D-ribosyl)glycinamide. (6R)-10-formyltetrahydrofolate contacts are provided by residues R64, 89–92 (MRIL), and N106. Residue H108 is the Proton donor of the active site. 140 to 144 (TDELD) contacts (6R)-10-formyltetrahydrofolate. N(1)-(5-phospho-beta-D-ribosyl)glycinamide is bound at residue 170–173 (QTQE).

It belongs to the GART family. In terms of assembly, monomer. Homodimer below pH 6.8.

It catalyses the reaction N(1)-(5-phospho-beta-D-ribosyl)glycinamide + (6R)-10-formyltetrahydrofolate = N(2)-formyl-N(1)-(5-phospho-beta-D-ribosyl)glycinamide + (6S)-5,6,7,8-tetrahydrofolate + H(+). It functions in the pathway purine metabolism; IMP biosynthesis via de novo pathway; N(2)-formyl-N(1)-(5-phospho-D-ribosyl)glycinamide from N(1)-(5-phospho-D-ribosyl)glycinamide (10-formyl THF route): step 1/1. Inhibited by N10-(bromoacetyl)-5,8-dideazafolate. Catalyzes the transfer of a formyl group from 10-formyltetrahydrofolate to 5-phospho-ribosyl-glycinamide (GAR), producing 5-phospho-ribosyl-N-formylglycinamide (FGAR) and tetrahydrofolate. This chain is Phosphoribosylglycinamide formyltransferase, found in Escherichia coli (strain K12).